Reading from the N-terminus, the 208-residue chain is Urease accessory protein UreG 1 (208 aa).

A GTP-binding site is contributed by 14–21; it reads GPVGSGKT.

Belongs to the SIMIBI class G3E GTPase family. UreG subfamily. As to quaternary structure, homodimer. UreD, UreF and UreG form a complex that acts as a GTP-hydrolysis-dependent molecular chaperone, activating the urease apoprotein by helping to assemble the nickel containing metallocenter of UreC. The UreE protein probably delivers the nickel.

The protein resides in the cytoplasm. Its function is as follows. Facilitates the functional incorporation of the urease nickel metallocenter. This process requires GTP hydrolysis, probably effectuated by UreG. The sequence is that of Urease accessory protein UreG 1 from Brucella ovis (strain ATCC 25840 / 63/290 / NCTC 10512).